The primary structure comprises 707 residues: Kinesin-like protein KIN-13B (707 aa).

A Kinesin motor domain is found at 152–477 (KIKVVVRKRP…LRYADRVKSL (326 aa)). 243 to 250 (GQTGSGKT) contacts ATP. A coiled-coil region spans residues 619–656 (EHLNELLQEEEDLVSAHRKQVEETLDMIKEEMNLLVEA).

This sequence belongs to the TRAFAC class myosin-kinesin ATPase superfamily. Kinesin family. KIN-13 subfamily.

This is Kinesin-like protein KIN-13B from Oryza sativa subsp. japonica (Rice).